The following is a 261-amino-acid chain: Beta cell expansion factor A (261 aa).

The first 21 residues, 1–21 (MNKRNWLLALSLSLAFSPCYA), serve as a signal peptide directing secretion. The tract at residues 99 to 261 (KTAKEARIAI…IDKDLTETSR (163 aa)) is SYLF domain.

The protein localises to the secreted. It localises to the host. In terms of biological role, stimulates the proliferation of insulin-producing beta cells during development in gnotobiotic zebrafish and mice. BefA is a microbiome-derived protein that traffics from the host intestinal lumen to the pancreas to act directly on pancreatic islets. In pancreas, interacts directly with host beta cells and elicits their proliferation via a mechanism of increasing membrane permeabilization. Can also permeabilize bacterial cell membranes, but does not show killing of target bacteria. This is Beta cell expansion factor A from Aeromonas veronii.